Here is a 303-residue protein sequence, read N- to C-terminus: Glycine--tRNA ligase alpha subunit (303 aa).

It belongs to the class-II aminoacyl-tRNA synthetase family. In terms of assembly, tetramer of two alpha and two beta subunits.

It is found in the cytoplasm. It catalyses the reaction tRNA(Gly) + glycine + ATP = glycyl-tRNA(Gly) + AMP + diphosphate. The protein is Glycine--tRNA ligase alpha subunit of Salmonella arizonae (strain ATCC BAA-731 / CDC346-86 / RSK2980).